The primary structure comprises 54 residues: Large ribosomal subunit protein bL33 (54 aa).

The protein belongs to the bacterial ribosomal protein bL33 family.

This Roseiflexus castenholzii (strain DSM 13941 / HLO8) protein is Large ribosomal subunit protein bL33.